A 115-amino-acid polypeptide reads, in one-letter code: Pancreatic progenitor cell differentiation and proliferation factor B (115 aa).

The tract at residues 21 to 48 is disordered; it reads IGSTSSSSSCGSSEYSGEVIPHHPGLPK. The segment covering 22–37 has biased composition (low complexity); it reads GSTSSSSSCGSSEYSG.

The protein belongs to the PPDPF family.

In terms of biological role, probable regulator of exocrine pancreas development. In Danio rerio (Zebrafish), this protein is Pancreatic progenitor cell differentiation and proliferation factor B (ppdpfb).